Here is a 161-residue protein sequence, read N- to C-terminus: Nucleotide-binding protein PFLU_4927 (161 aa).

Belongs to the YajQ family.

Nucleotide-binding protein. This is Nucleotide-binding protein PFLU_4927 from Pseudomonas fluorescens (strain SBW25).